Here is a 558-residue protein sequence, read N- to C-terminus: Methionine--tRNA ligase 1 (558 aa).

The short motif at 10 to 20 is the 'HIGH' region element; sequence PYINGIKHLGN. The Zn(2+) site is built by cysteine 142, cysteine 145, cysteine 155, and cysteine 158. The 'KMSKS' region motif lies at 332–336; that stretch reads KFSTS. ATP is bound at residue threonine 335.

This sequence belongs to the class-I aminoacyl-tRNA synthetase family. MetG type 1 subfamily. In terms of assembly, monomer. Zn(2+) serves as cofactor.

It is found in the cytoplasm. It carries out the reaction tRNA(Met) + L-methionine + ATP = L-methionyl-tRNA(Met) + AMP + diphosphate. In terms of biological role, is required not only for elongation of protein synthesis but also for the initiation of all mRNA translation through initiator tRNA(fMet) aminoacylation. In Acaryochloris marina (strain MBIC 11017), this protein is Methionine--tRNA ligase 1.